Here is a 214-residue protein sequence, read N- to C-terminus: tRNA (guanine-N(7)-)-methyltransferase (214 aa).

S-adenosyl-L-methionine is bound by residues Glu-43, Glu-68, Asp-95, and Asp-117. The active site involves Asp-117. Substrate is bound by residues Lys-121, Asp-153, and 190–193 (TEYE).

This sequence belongs to the class I-like SAM-binding methyltransferase superfamily. TrmB family.

It catalyses the reaction guanosine(46) in tRNA + S-adenosyl-L-methionine = N(7)-methylguanosine(46) in tRNA + S-adenosyl-L-homocysteine. It functions in the pathway tRNA modification; N(7)-methylguanine-tRNA biosynthesis. Catalyzes the formation of N(7)-methylguanine at position 46 (m7G46) in tRNA. The polypeptide is tRNA (guanine-N(7)-)-methyltransferase (Staphylococcus aureus (strain Mu3 / ATCC 700698)).